Here is a 233-residue protein sequence, read N- to C-terminus: Cell number regulator 8 (233 aa).

A run of 2 helical transmembrane segments spans residues Val-85 to Val-101 and Cys-115 to Phe-138.

This sequence belongs to the cornifelin family. As to expression, expressed in roots, coleoptiles, leaves, stalks, apical meristems, immature ears, embryos, endosperm, pericarp, silks, tassel spikelets and pollen. Highest expression in the pericarp and stalks.

Its subcellular location is the membrane. This Zea mays (Maize) protein is Cell number regulator 8 (CNR8).